Consider the following 303-residue polypeptide: Probable cell division protein WhiA (303 aa).

The H-T-H motif DNA-binding region spans 272–303 (SLQQIADSLDFAITKSGVNHRLRKINKLAEDL).

This sequence belongs to the WhiA family.

Functionally, involved in cell division and chromosome segregation. This chain is Probable cell division protein WhiA, found in Streptococcus equi subsp. zooepidemicus (strain MGCS10565).